Consider the following 193-residue polypeptide: dCTP deaminase (193 aa).

DCTP-binding positions include 110–115 (RSSLAR), Asp128, 136–138 (VLE), Tyr171, Lys178, and Gln182. The active-site Proton donor/acceptor is the Glu138. A disordered region spans residues 169 to 193 (RPYNSRQDAKYKGQQGAVASRIDKD).

Belongs to the dCTP deaminase family. In terms of assembly, homotrimer.

It catalyses the reaction dCTP + H2O + H(+) = dUTP + NH4(+). The protein operates within pyrimidine metabolism; dUMP biosynthesis; dUMP from dCTP (dUTP route): step 1/2. Its function is as follows. Catalyzes the deamination of dCTP to dUTP. The protein is dCTP deaminase of Erwinia tasmaniensis (strain DSM 17950 / CFBP 7177 / CIP 109463 / NCPPB 4357 / Et1/99).